Here is a 102-residue protein sequence, read N- to C-terminus: Large ribosomal subunit protein bL21 (102 aa).

The span at 80 to 91 (KNSKRKKGHRQP) shows a compositional bias: basic residues. Residues 80–102 (KNSKRKKGHRQPYTKLTIDKINA) are disordered.

The protein belongs to the bacterial ribosomal protein bL21 family. Part of the 50S ribosomal subunit. Contacts protein L20.

Functionally, this protein binds to 23S rRNA in the presence of protein L20. In Staphylococcus aureus (strain Mu3 / ATCC 700698), this protein is Large ribosomal subunit protein bL21.